Here is a 760-residue protein sequence, read N- to C-terminus: Polyribonucleotide nucleotidyltransferase (760 aa).

2 residues coordinate Mg(2+): D492 and D498. Positions P559–V618 constitute a KH domain. The S1 motif domain maps to G628–Q702. The tract at residues W706 to N760 is disordered. The segment covering E719–N760 has biased composition (basic and acidic residues).

It belongs to the polyribonucleotide nucleotidyltransferase family. Requires Mg(2+) as cofactor.

The protein localises to the cytoplasm. It catalyses the reaction RNA(n+1) + phosphate = RNA(n) + a ribonucleoside 5'-diphosphate. Involved in mRNA degradation. Catalyzes the phosphorolysis of single-stranded polyribonucleotides processively in the 3'- to 5'-direction. This is Polyribonucleotide nucleotidyltransferase from Nitratidesulfovibrio vulgaris (strain ATCC 29579 / DSM 644 / CCUG 34227 / NCIMB 8303 / VKM B-1760 / Hildenborough) (Desulfovibrio vulgaris).